The primary structure comprises 615 residues: Dihydroxy-acid dehydratase (615 aa).

Asp81 lines the Mg(2+) pocket. Cys122 contacts [2Fe-2S] cluster. The Mg(2+) site is built by Asp123 and Lys124. Lys124 bears the N6-carboxylysine mark. Cys195 contributes to the [2Fe-2S] cluster binding site. Glu491 serves as a coordination point for Mg(2+). Ser517 functions as the Proton acceptor in the catalytic mechanism.

It belongs to the IlvD/Edd family. In terms of assembly, homodimer. It depends on [2Fe-2S] cluster as a cofactor. Mg(2+) is required as a cofactor.

The catalysed reaction is (2R)-2,3-dihydroxy-3-methylbutanoate = 3-methyl-2-oxobutanoate + H2O. It carries out the reaction (2R,3R)-2,3-dihydroxy-3-methylpentanoate = (S)-3-methyl-2-oxopentanoate + H2O. The protein operates within amino-acid biosynthesis; L-isoleucine biosynthesis; L-isoleucine from 2-oxobutanoate: step 3/4. It participates in amino-acid biosynthesis; L-valine biosynthesis; L-valine from pyruvate: step 3/4. Functionally, functions in the biosynthesis of branched-chain amino acids. Catalyzes the dehydration of (2R,3R)-2,3-dihydroxy-3-methylpentanoate (2,3-dihydroxy-3-methylvalerate) into 2-oxo-3-methylpentanoate (2-oxo-3-methylvalerate) and of (2R)-2,3-dihydroxy-3-methylbutanoate (2,3-dihydroxyisovalerate) into 2-oxo-3-methylbutanoate (2-oxoisovalerate), the penultimate precursor to L-isoleucine and L-valine, respectively. The polypeptide is Dihydroxy-acid dehydratase (Shewanella halifaxensis (strain HAW-EB4)).